The following is a 540-amino-acid chain: DM7 family protein GD24576 (540 aa).

Residues 416–443 (ATDTRGRDEIRTSCDQSQEKDEGSAEAD) form a disordered region. Positions 417-443 (TDTRGRDEIRTSCDQSQEKDEGSAEAD) are enriched in basic and acidic residues.

This sequence belongs to the DM7 family.

The sequence is that of DM7 family protein GD24576 from Drosophila simulans (Fruit fly).